The chain runs to 1206 residues: Translocase of chloroplast 132, chloroplastic (1206 aa).

Gly2 is subject to N-acetylglycine. A coiled-coil region spans residues 13 to 33 (REDKKLAEDRISDEQVVKNEL). Disordered regions lie at residues 33-75 (LVRS…SDDL) and 97-119 (VGDL…VGES). Acidic residues predominate over residues 39 to 49 (VRDDNEDEVFE). Ser195 is modified (phosphoserine). The segment at 233 to 499 (QTEQEVEEGE…TTTEADEHDE (267 aa)) is disordered. Polar residues predominate over residues 309 to 324 (AYTSNIVTNASGDNEV). Low complexity predominate over residues 325–336 (SSAVTSSPLEES). Phosphoserine is present on residues Ser337, Ser363, and Ser398. Polar residues predominate over residues 357 to 379 (LASSPHSYPESTEVHSNSGSPGV). Residues 403-427 (KELEKQQSSRVHVDPEITENSHVET) are compositionally biased toward basic and acidic residues. Residues 430–440 (EVVSSVSPTES) are compositionally biased toward low complexity. Over residues 468-492 (APQQSRVNGNGSHNQFQQAEDSTTT) the composition is skewed to polar residues. The region spanning 572-801 (DFSCTIMVLG…KLQDNIPGRP (230 aa)) is the AIG1-type G domain. The tract at residues 581 to 588 (GKSGVGKS) is G1. Residues 584 to 589 (GVGKSA) and 603 to 608 (DAFQMG) contribute to the GTP site. Ser588 is a binding site for Mg(2+). Residues 603–606 (DAFQ) form a homodimerization region. The tract at residues 607–611 (MGTKR) is G2. The interval 628 to 631 (DTPG) is G3. The interval 666 to 671 (RLDMQS) is homodimerization. The G4 stretch occupies residues 700-703 (THAA). GTP is bound by residues His701 and 749 to 750 (EN). The segment at 749-751 (ENH) is G5. The segment at 824–862 (QPKLPEQQYGDEEDEDDLEESSDSDEESEYDQLPPFKSL) is disordered. Acidic residues predominate over residues 832 to 853 (YGDEEDEDDLEESSDSDEESEY). Residues 1182–1199 (LAMVAIVPLFKKLLSYYY) form a helical membrane-spanning segment.

It belongs to the TRAFAC class TrmE-Era-EngA-EngB-Septin-like GTPase superfamily. AIG1/Toc34/Toc159-like paraseptin GTPase family. TOC159 subfamily. As to quaternary structure, homodimer. Part of the TOC core complex that includes 1 protein for the specific recognition of transit peptides surrounded by a ring composed of four proteins forming translocation channels, and four to five GTP-binding proteins providing energy. This core complex can interact with components of the TIC complex to form a larger import complex. Chloroplastic protein precursor such as prSS (precursor of the RuBisCO small subunit) interacts with these complexes. The TOC complex contains a specific subset of polar lipids such as digalactosyldiacylglyceride (DGDG), phosphatidylcholine (PC) and phosphatidylglycerol (PG). Mg(2+) serves as cofactor. In terms of processing, phosphorylated by KOC1. As to expression, expressed in seedlings, leaves, flowers, and roots.

The protein localises to the plastid. It is found in the chloroplast outer membrane. Its subcellular location is the cytoplasm. Its function is as follows. GTPase involved in protein precursor import into chloroplasts. Seems to recognize chloroplast-destined precursor proteins and regulate their presentation to the translocation channel through GTP hydrolysis. Probably specialized in the import of nuclear encoded non-photosynthetic preproteins from the cytoplasm to the chloroplast. The sequence is that of Translocase of chloroplast 132, chloroplastic from Arabidopsis thaliana (Mouse-ear cress).